The sequence spans 1366 residues: DNA-directed RNA polymerase subunit beta (1366 aa).

This sequence belongs to the RNA polymerase beta chain family. The RNAP catalytic core consists of 2 alpha, 1 beta, 1 beta' and 1 omega subunit. When a sigma factor is associated with the core the holoenzyme is formed, which can initiate transcription.

It catalyses the reaction RNA(n) + a ribonucleoside 5'-triphosphate = RNA(n+1) + diphosphate. In terms of biological role, DNA-dependent RNA polymerase catalyzes the transcription of DNA into RNA using the four ribonucleoside triphosphates as substrates. This Polynucleobacter necessarius subsp. necessarius (strain STIR1) protein is DNA-directed RNA polymerase subunit beta.